We begin with the raw amino-acid sequence, 210 residues long: Transcription factor ALC (210 aa).

The tract at residues 1–49 (MGDSDVGDRLPPPSSSDELSSFLRQILSRTPTAQPSSPPKSTNVSSAET) is disordered. A compositionally biased stretch (polar residues) spans 27–48 (LSRTPTAQPSSPPKSTNVSSAE). Residues 93-142 (IDAQFHNLSEKKRRSKINEKMKALQKLIPNSNKTDKASMLDEAIEYLKQL) enclose the bHLH domain.

In terms of assembly, homodimer. As to expression, expressed constitutively in roots, leaves, stems, and flowers. Confined to the valve margins of the silique.

It localises to the nucleus. In terms of biological role, required for the dehiscence of fruit, especially for the separation of the valve cells from the replum. Promotes the differentiation of a strip of labile nonlignified cells sandwiched between layers of lignified cells. The polypeptide is Transcription factor ALC (ALC) (Arabidopsis thaliana (Mouse-ear cress)).